Here is an 89-residue protein sequence, read N- to C-terminus: NADH-ubiquinone oxidoreductase chain 4L (89 aa).

The next 3 helical transmembrane spans lie at 1 to 21 (MNLT…NRKN), 22 to 42 (IILM…LILV), and 57 to 77 (IYII…LVAF).

The protein belongs to the complex I subunit 4L family.

Its subcellular location is the mitochondrion membrane. The enzyme catalyses a ubiquinone + NADH + 5 H(+)(in) = a ubiquinol + NAD(+) + 4 H(+)(out). Functionally, core subunit of the mitochondrial membrane respiratory chain NADH dehydrogenase (Complex I) that is believed to belong to the minimal assembly required for catalysis. Complex I functions in the transfer of electrons from NADH to the respiratory chain. The immediate electron acceptor for the enzyme is believed to be ubiquinone. This chain is NADH-ubiquinone oxidoreductase chain 4L (ND4L), found in Cryphonectria parasitica (Chestnut blight fungus).